The primary structure comprises 282 residues: Ribosomal RNA small subunit methyltransferase I (282 aa).

It belongs to the methyltransferase superfamily. RsmI family.

The protein localises to the cytoplasm. It carries out the reaction cytidine(1402) in 16S rRNA + S-adenosyl-L-methionine = 2'-O-methylcytidine(1402) in 16S rRNA + S-adenosyl-L-homocysteine + H(+). Functionally, catalyzes the 2'-O-methylation of the ribose of cytidine 1402 (C1402) in 16S rRNA. The sequence is that of Ribosomal RNA small subunit methyltransferase I from Buchnera aphidicola subsp. Acyrthosiphon pisum (strain APS) (Acyrthosiphon pisum symbiotic bacterium).